The sequence spans 344 residues: Phenylalanine--tRNA ligase alpha subunit (344 aa).

Residue glutamate 256 coordinates Mg(2+).

The protein belongs to the class-II aminoacyl-tRNA synthetase family. Phe-tRNA synthetase alpha subunit type 1 subfamily. As to quaternary structure, tetramer of two alpha and two beta subunits. The cofactor is Mg(2+).

Its subcellular location is the cytoplasm. It carries out the reaction tRNA(Phe) + L-phenylalanine + ATP = L-phenylalanyl-tRNA(Phe) + AMP + diphosphate + H(+). The chain is Phenylalanine--tRNA ligase alpha subunit from Bacillus mycoides (strain KBAB4) (Bacillus weihenstephanensis).